Reading from the N-terminus, the 286-residue chain is MTIRFDNVSYTYQKGTPYQHQAIHDVNTEFEQGKYYAIVGQTGSGKSTLIQNINALLKPTTGTVTVDDITITHKTKDKYIRPVRKRIGMVFQFPESQLFEDTVEREMIFGPKNFKMNLDEAKNYAHRLLMDLGFSRDVMSQSPFQMSGGQMRKIAIVSILAMNPDIIVVDEPTAGLDPQSKRQVMRLLKSLQTDENKAIILISHDMNEVARYADEVIVMKEGSIVSQTSPKELFKDKEKLADWHIALPEIVQLQYDFEQKHQTKLKDIALTEEAFVSLYKEWQHEK.

The ABC transporter domain occupies 3–246; the sequence is IRFDNVSYTY…KEKLADWHIA (244 aa). 40–47 contacts ATP; that stretch reads GQTGSGKS.

It belongs to the ABC transporter superfamily. Energy-coupling factor EcfA family. Forms a stable energy-coupling factor (ECF) transporter complex composed of 2 membrane-embedded substrate-binding proteins (S component), 2 ATP-binding proteins (A component) and 2 transmembrane proteins (T component).

Its subcellular location is the cell membrane. In terms of biological role, ATP-binding (A) component of a common energy-coupling factor (ECF) ABC-transporter complex. Unlike classic ABC transporters this ECF transporter provides the energy necessary to transport a number of different substrates. The polypeptide is Energy-coupling factor transporter ATP-binding protein EcfA2 (Staphylococcus aureus (strain bovine RF122 / ET3-1)).